Reading from the N-terminus, the 116-residue chain is Evasin P1180 (116 aa).

Residues 1-25 form the signal peptide; it reads MARNWSFRVIFVSAMWCALLKFATL. 4 disulfides stabilise this stretch: cysteine 38–cysteine 58, cysteine 54–cysteine 95, cysteine 71–cysteine 100, and cysteine 90–cysteine 109. 3 N-linked (GlcNAc...) asparagine glycosylation sites follow: asparagine 45, asparagine 73, and asparagine 104.

The protein localises to the secreted. Its function is as follows. Salivary chemokine-binding protein which binds to host chemokines CCL2, CCL3, CCL4, CCL8 and CCL18. In Amblyomma triste (Neotropical tick), this protein is Evasin P1180.